The primary structure comprises 548 residues: Flagellin (548 aa).

Belongs to the bacterial flagellin family.

The protein localises to the secreted. The protein resides in the bacterial flagellum. Functionally, flagellin is the subunit protein which polymerizes to form the filaments of bacterial flagella. In Escherichia coli O127:H6 (strain E2348/69 / EPEC), this protein is Flagellin (fliC).